Here is a 121-residue protein sequence, read N- to C-terminus: Large ribosomal subunit protein bL12 (121 aa).

The protein belongs to the bacterial ribosomal protein bL12 family. In terms of assembly, homodimer. Part of the ribosomal stalk of the 50S ribosomal subunit. Forms a multimeric L10(L12)X complex, where L10 forms an elongated spine to which 2 to 4 L12 dimers bind in a sequential fashion. Binds GTP-bound translation factors.

Forms part of the ribosomal stalk which helps the ribosome interact with GTP-bound translation factors. Is thus essential for accurate translation. The protein is Large ribosomal subunit protein bL12 of Shigella sonnei (strain Ss046).